A 946-amino-acid chain; its full sequence is Protocadherin alpha-10 (946 aa).

An N-terminal signal peptide occupies residues 1 to 30 (MSCVAMKYCHESWCLLLSLLLFAIWEPGSG). 6 Cadherin domains span residues 31 to 134 (QLRY…PPVF), 135 to 243 (PTTE…APAF), 244 to 351 (DRAI…APKI), 352 to 456 (IVTS…APAF), 457 to 566 (AQSE…APTL), and 582 to 679 (VPRS…APKA). At 31–697 (QLRYSVPEEA…ASESSVVDVN (667 aa)) the chain is on the extracellular side. N-linked (GlcNAc...) asparagine glycosylation occurs at asparagine 258. Asparagine 549 carries an N-linked (GlcNAc...) asparagine glycan. A helical transmembrane segment spans residues 698–718 (VYLIIAICAVSSLLVLTLVLY). At 719-946 (TALRCSALPT…GNSTTDNSDQ (228 aa)) the chain is on the cytoplasmic side. 6 PXXP repeats span residues 734–737 (PGKP), 774–777 (PSVP), 795–798 (PRQP), 828–831 (PGGP), 869–872 (PGNP), and 887–890 (PGSP). A 6 X 4 AA repeats of P-X-X-P region spans residues 734 to 890 (PGKPMLVCSS…PDKFIIPGSP (157 aa)). Disordered stretches follow at residues 826–852 (AGPGGPDQQWPTVSSATPEPEAGEVSP) and 865–946 (FKYG…NSDQ). Positions 905–919 (DKSDFITFGKKEETK) are enriched in basic and acidic residues.

Its subcellular location is the cell membrane. Functionally, potential calcium-dependent cell-adhesion protein. May be involved in the establishment and maintenance of specific neuronal connections in the brain. The polypeptide is Protocadherin alpha-10 (Mus musculus (Mouse)).